Reading from the N-terminus, the 270-residue chain is Chlorophyll a-b binding protein, chloroplastic (270 aa).

A chloroplast-targeting transit peptide spans 1–41 (MASACASSTIAAVAFSSPSSQKNGSIVGATKASFLGGKRLR). Trp68 lines the chlorophyll b pocket. 3 residues coordinate chlorophyll a: Phe88, Glu107, and His110. Arg112 provides a ligand contact to chlorophyll b. Residues 113-133 (WAMLGAAGIFIPEFLTKIGVL) traverse the membrane as a helical segment. Gln144 serves as a coordination point for chlorophyll a. Residues 146–166 (YFTDTTTLFVIELVLIGWAEG) traverse the membrane as a helical segment. Residues Val155, Glu165, and Arg168 each contribute to the chlorophyll b site. Chlorophyll a-binding residues include Lys221, Glu222, Asn225, Arg227, Gln239, and His254. A helical transmembrane segment spans residues 228 to 248 (LAMLAVMGAWFQHIYTGTGPI).

It belongs to the light-harvesting chlorophyll a/b-binding (LHC) protein family. As to quaternary structure, the LHC complex consists of chlorophyll a-b binding proteins. The cofactor is Binds at least 14 chlorophylls (8 Chl-a and 6 Chl-b) and carotenoids such as lutein and neoxanthin.. Photoregulated by reversible phosphorylation of its threonine residues.

The protein resides in the plastid. Its subcellular location is the chloroplast thylakoid membrane. The light-harvesting complex (LHC) functions as a light receptor, it captures and delivers excitation energy to photosystems with which it is closely associated. This Petunia hybrida (Petunia) protein is Chlorophyll a-b binding protein, chloroplastic.